Reading from the N-terminus, the 243-residue chain is Thaumatin-like protein 1 (243 aa).

The signal sequence occupies residues 1–22 (MMKTLALYGLTLALFFLSGAHS). 8 disulfide bridges follow: Cys-31/Cys-242, Cys-79/Cys-88, Cys-93/Cys-100, Cys-148/Cys-231, Cys-153/Cys-214, Cys-161/Cys-177, Cys-181/Cys-190, and Cys-191/Cys-201.

It belongs to the thaumatin family.

Its subcellular location is the secreted. It localises to the extracellular space. The protein localises to the apoplast. Its function is as follows. Possesses antifungal activity. This is Thaumatin-like protein 1 (TL1) from Castanea sativa (Sweet chestnut).